The sequence spans 491 residues: 3-octaprenyl-4-hydroxybenzoate carboxy-lyase (491 aa).

Asn-172 contributes to the Mn(2+) binding site. Prenylated FMN is bound by residues 175 to 177 (IYR), 189 to 191 (RWL), and 194 to 195 (RG). Residue Glu-238 coordinates Mn(2+). Residue Asp-287 is the Proton donor of the active site.

This sequence belongs to the UbiD family. As to quaternary structure, homohexamer. Prenylated FMN is required as a cofactor. Requires Mn(2+) as cofactor.

The protein localises to the cell membrane. It catalyses the reaction a 4-hydroxy-3-(all-trans-polyprenyl)benzoate + H(+) = a 2-(all-trans-polyprenyl)phenol + CO2. It functions in the pathway cofactor biosynthesis; ubiquinone biosynthesis. Catalyzes the decarboxylation of 3-octaprenyl-4-hydroxy benzoate to 2-octaprenylphenol, an intermediate step in ubiquinone biosynthesis. This chain is 3-octaprenyl-4-hydroxybenzoate carboxy-lyase, found in Klebsiella pneumoniae subsp. pneumoniae (strain ATCC 700721 / MGH 78578).